We begin with the raw amino-acid sequence, 735 residues long: DNA replication licensing factor mcm5-A (735 aa).

The MCM domain maps to 332 to 538 (IYETVAKSIA…RDMTLAKHVM (207 aa)). Arginine 372 is a binding site for ADP. An Arginine finger motif is present at residues 513-516 (SRFD).

This sequence belongs to the MCM family. In terms of assembly, component of the mcm2-7 complex (RLF-M). The complex forms a toroidal hexameric ring with the proposed subunit order mcm2-mcm6-mcm4-mcm7-mcm3-mcm5. The heterodimer of mmcm3/mcm5 interacts with mcm4, mmcm6, mcm7 and weakly with mcm2. Component of the CMG helicase complex, composed of the mcm2-7 complex, the GINS complex and cdc45.

It is found in the nucleus. The protein resides in the chromosome. The catalysed reaction is ATP + H2O = ADP + phosphate + H(+). Acts as a component of the MCM2-7 complex (MCM complex) which is the replicative helicase essential for 'once per cell cycle' DNA replication initiation and elongation in eukaryotic cells. Core component of CDC45-MCM-GINS (CMG) helicase, the molecular machine that unwinds template DNA during replication, and around which the replisome is built. The active ATPase sites in the MCM2-7 ring are formed through the interaction surfaces of two neighboring subunits such that a critical structure of a conserved arginine finger motif is provided in trans relative to the ATP-binding site of the Walker A box of the adjacent subunit. The six ATPase active sites, however, are likely to contribute differentially to the complex helicase activity. The sequence is that of DNA replication licensing factor mcm5-A (mcm5-a) from Xenopus laevis (African clawed frog).